The chain runs to 475 residues: Aspartyl/glutamyl-tRNA(Asn/Gln) amidotransferase subunit B (475 aa).

It belongs to the GatB/GatE family. GatB subfamily. Heterotrimer of A, B and C subunits.

It catalyses the reaction L-glutamyl-tRNA(Gln) + L-glutamine + ATP + H2O = L-glutaminyl-tRNA(Gln) + L-glutamate + ADP + phosphate + H(+). It carries out the reaction L-aspartyl-tRNA(Asn) + L-glutamine + ATP + H2O = L-asparaginyl-tRNA(Asn) + L-glutamate + ADP + phosphate + 2 H(+). Its function is as follows. Allows the formation of correctly charged Asn-tRNA(Asn) or Gln-tRNA(Gln) through the transamidation of misacylated Asp-tRNA(Asn) or Glu-tRNA(Gln) in organisms which lack either or both of asparaginyl-tRNA or glutaminyl-tRNA synthetases. The reaction takes place in the presence of glutamine and ATP through an activated phospho-Asp-tRNA(Asn) or phospho-Glu-tRNA(Gln). This is Aspartyl/glutamyl-tRNA(Asn/Gln) amidotransferase subunit B from Staphylococcus saprophyticus subsp. saprophyticus (strain ATCC 15305 / DSM 20229 / NCIMB 8711 / NCTC 7292 / S-41).